We begin with the raw amino-acid sequence, 714 residues long: Mitochondrial potassium channel ATP-binding subunit (714 aa).

The transit peptide at 1–25 (MLVHLFRVGIRGGPVPRWSLQSLRF) directs the protein to the mitochondrion. Helical transmembrane passes span 127–147 (LLAL…NVQI), 178–198 (IQLL…LVLL), 278–298 (LMLA…GSGL), and 365–385 (NIAF…LVAG). The 288-residue stretch at 132 to 419 (LAIVLALGAA…LSVLFGQVVR (288 aa)) folds into the ABC transmembrane type-1 domain. The region spanning 454–691 (ITFQNVSFSY…GGLYAELIRR (238 aa)) is the ABC transporter domain. 489 to 496 (GQSGGGKT) contributes to the ATP binding site.

The protein belongs to the ABC transporter superfamily. ABCB family. Multidrug resistance exporter (TC 3.A.1.201) subfamily. As to quaternary structure, the mitochondrial potassium channel (mitoK(ATP)) is composed of 4 subunits of CCDC51/MITOK and 4 subunits of ABCB8/MITOSUR. Physically interacts with PAAT. Interacts with Neuropilin-1 (NRP1) in mitochondria. Strong expression is found in the heart, brain and testis. In the testis, expressed both in the somatic Sertoli cells and peritubular cells and in the germline (spermatogonia and pachytene spermatocytes). Also expressed in the lung, liver, intestine and kidney.

The protein resides in the mitochondrion inner membrane. Its activity is regulated as follows. Channel activity inhibited by ATP via ABCB8/MITOSUR subunit. Its function is as follows. ATP-binding subunit of the mitochondrial ATP-gated potassium channel (mitoK(ATP)). v. An increase in ATP intracellular levels closes the channel, inhibiting K(+) transport, whereas a decrease in ATP levels enhances K(+) uptake in the mitochondrial matrix. Plays a role in mitochondrial iron transport. Required for maintenance of normal cardiac function, possibly by influencing mitochondrial iron export and regulating the maturation of cytosolic iron sulfur cluster-containing enzymes. This is Mitochondrial potassium channel ATP-binding subunit from Rattus norvegicus (Rat).